A 126-amino-acid polypeptide reads, in one-letter code: Small ribosomal subunit protein bS6 (126 aa).

The tract at residues 104–126 (LARRDRGDRPERPREDFGAQAQA) is disordered. Residues 105-120 (ARRDRGDRPERPREDF) show a composition bias toward basic and acidic residues.

Belongs to the bacterial ribosomal protein bS6 family.

Binds together with bS18 to 16S ribosomal RNA. The sequence is that of Small ribosomal subunit protein bS6 from Caulobacter vibrioides (strain ATCC 19089 / CIP 103742 / CB 15) (Caulobacter crescentus).